The chain runs to 190 residues: dTTP/UTP pyrophosphatase (190 aa).

The active-site Proton acceptor is the Asp69.

Belongs to the Maf family. YhdE subfamily. The cofactor is a divalent metal cation.

It localises to the cytoplasm. It carries out the reaction dTTP + H2O = dTMP + diphosphate + H(+). The enzyme catalyses UTP + H2O = UMP + diphosphate + H(+). Nucleoside triphosphate pyrophosphatase that hydrolyzes dTTP and UTP. May have a dual role in cell division arrest and in preventing the incorporation of modified nucleotides into cellular nucleic acids. This chain is dTTP/UTP pyrophosphatase, found in Sphingopyxis alaskensis (strain DSM 13593 / LMG 18877 / RB2256) (Sphingomonas alaskensis).